The primary structure comprises 58 residues: U8-ctenitoxin-Pr1a (58 aa).

5 disulfides stabilise this stretch: C2–C16, C9–C22, C15–C40, C24–C38, and C48–C55.

As to expression, expressed by the venom gland.

The protein resides in the secreted. Its function is as follows. No toxic effects on mice at dose levels of 5 ug per mouse. May be toxic to insects. In Phoneutria reidyi (Brazilian Amazonian armed spider), this protein is U8-ctenitoxin-Pr1a.